We begin with the raw amino-acid sequence, 315 residues long: Carbamate kinase (315 aa).

The protein belongs to the carbamate kinase family. In terms of assembly, homodimer.

It is found in the cytoplasm. The catalysed reaction is hydrogencarbonate + NH4(+) + ATP = carbamoyl phosphate + ADP + H2O + H(+). The sequence is that of Carbamate kinase (cpkA) from Thermococcus kodakarensis (strain ATCC BAA-918 / JCM 12380 / KOD1) (Pyrococcus kodakaraensis (strain KOD1)).